The chain runs to 200 residues: MSGFKQHTGLVVPLDTANIDTDAIIPKQFLQKVNRIGFGKHLFHDWRFLDDAGEQPNPEFVMNAPRYQGATVLLARENFGCGSSREHAPWSLADYGIQVMIAPSFADIFYGNSINNQMVPVRLTESEVDEIFQFVEANEGAEVTVDLEAMLVTANNKQYSFEIDEFRRHCLLNGLDNIGLTLQHADKISEYEAKIPSFLK.

It belongs to the LeuD family. LeuD type 1 subfamily. As to quaternary structure, heterodimer of LeuC and LeuD.

It catalyses the reaction (2R,3S)-3-isopropylmalate = (2S)-2-isopropylmalate. It participates in amino-acid biosynthesis; L-leucine biosynthesis; L-leucine from 3-methyl-2-oxobutanoate: step 2/4. Functionally, catalyzes the isomerization between 2-isopropylmalate and 3-isopropylmalate, via the formation of 2-isopropylmaleate. This chain is 3-isopropylmalate dehydratase small subunit, found in Aliivibrio fischeri (strain ATCC 700601 / ES114) (Vibrio fischeri).